Consider the following 399-residue polypeptide: Glucose-1-phosphate adenylyltransferase (399 aa).

Residues tyrosine 100, glycine 165, 180–181, and serine 191 each bind alpha-D-glucose 1-phosphate; that span reads EK.

It belongs to the bacterial/plant glucose-1-phosphate adenylyltransferase family. In terms of assembly, homotetramer.

The catalysed reaction is alpha-D-glucose 1-phosphate + ATP + H(+) = ADP-alpha-D-glucose + diphosphate. The protein operates within glycan biosynthesis; glycogen biosynthesis. Functionally, involved in the biosynthesis of ADP-glucose, a building block required for the elongation reactions to produce glycogen. Catalyzes the reaction between ATP and alpha-D-glucose 1-phosphate (G1P) to produce pyrophosphate and ADP-Glc. In Desulforamulus reducens (strain ATCC BAA-1160 / DSM 100696 / MI-1) (Desulfotomaculum reducens), this protein is Glucose-1-phosphate adenylyltransferase.